The chain runs to 432 residues: Probable D-serine dehydratase (432 aa).

An N6-(pyridoxal phosphate)lysine modification is found at Lys-112.

This sequence belongs to the serine/threonine dehydratase family. DsdA subfamily. The cofactor is pyridoxal 5'-phosphate.

The enzyme catalyses D-serine = pyruvate + NH4(+). The sequence is that of Probable D-serine dehydratase from Pediococcus pentosaceus (strain ATCC 25745 / CCUG 21536 / LMG 10740 / 183-1w).